The primary structure comprises 359 residues: Molybdenum import ATP-binding protein ModC (359 aa).

One can recognise an ABC transporter domain in the interval 1-229 (MLELNFSQQL…SALRPWLQRE (229 aa)). 31–38 (GLSGAGKT) serves as a coordination point for ATP. Residues 289–354 (SSSIRNILPV…IKSVSFNRQN (66 aa)) enclose the Mop domain.

This sequence belongs to the ABC transporter superfamily. Molybdate importer (TC 3.A.1.8) family. In terms of assembly, the complex is composed of two ATP-binding proteins (ModC), two transmembrane proteins (ModB) and a solute-binding protein (ModA).

Its subcellular location is the cell inner membrane. It catalyses the reaction molybdate(out) + ATP + H2O = molybdate(in) + ADP + phosphate + H(+). Its function is as follows. Part of the ABC transporter complex ModABC involved in molybdenum import. Responsible for energy coupling to the transport system. This is Molybdenum import ATP-binding protein ModC from Yersinia pseudotuberculosis serotype I (strain IP32953).